We begin with the raw amino-acid sequence, 183 residues long: Protein vem-1 (183 aa).

A helical membrane pass occupies residues 9 to 29; it reads FTMYDAVFLVVVLGFFFYWLT. In terms of domain architecture, Cytochrome b5 heme-binding spans 47–146; it reads MSDMTVEELR…FKYLTVGRLV (100 aa).

This sequence belongs to the cytochrome b5 family. MAPR subfamily. Interacts with unc-40 (via cytoplasmic domain). As to expression, expressed in the AVG pioneer midline neuron and in several nerve ring neurons that extend projecting axons into the right ventral nerve cord.

Its subcellular location is the membrane. It is found in the cell projection. It localises to the axon. In terms of biological role, transmembrane protein required for the axon guidance of a subset of ventral nerve cord-associated interneurons and motor neurons. May function with the netrin receptor unc-40 in axon guidance. The protein is Protein vem-1 of Caenorhabditis elegans.